The primary structure comprises 190 residues: Peptidyl-tRNA hydrolase (190 aa).

Residue Phe14 coordinates tRNA. The active-site Proton acceptor is His19. 3 residues coordinate tRNA: Met64, Asn66, and Asn112.

This sequence belongs to the PTH family. In terms of assembly, monomer.

The protein localises to the cytoplasm. It catalyses the reaction an N-acyl-L-alpha-aminoacyl-tRNA + H2O = an N-acyl-L-amino acid + a tRNA + H(+). Its function is as follows. Hydrolyzes ribosome-free peptidyl-tRNAs (with 1 or more amino acids incorporated), which drop off the ribosome during protein synthesis, or as a result of ribosome stalling. In terms of biological role, catalyzes the release of premature peptidyl moieties from peptidyl-tRNA molecules trapped in stalled 50S ribosomal subunits, and thus maintains levels of free tRNAs and 50S ribosomes. The polypeptide is Peptidyl-tRNA hydrolase (Staphylococcus aureus (strain Mu3 / ATCC 700698)).